The primary structure comprises 341 residues: GTPase Obg (341 aa).

An Obg domain is found at Met-1–Leu-159. Positions Thr-128 to Arg-150 are disordered. The segment covering Arg-129–Gly-144 has biased composition (polar residues). Residues Ala-160–Asp-334 form the OBG-type G domain. GTP contacts are provided by residues Gly-166–Ser-173, Phe-191–His-195, Asp-213–Gly-216, Asn-283–Asp-286, and Ser-315–Ile-317. 2 residues coordinate Mg(2+): Ser-173 and Thr-193.

Belongs to the TRAFAC class OBG-HflX-like GTPase superfamily. OBG GTPase family. As to quaternary structure, monomer. Mg(2+) serves as cofactor.

It localises to the cytoplasm. Functionally, an essential GTPase which binds GTP, GDP and possibly (p)ppGpp with moderate affinity, with high nucleotide exchange rates and a fairly low GTP hydrolysis rate. Plays a role in control of the cell cycle, stress response, ribosome biogenesis and in those bacteria that undergo differentiation, in morphogenesis control. This chain is GTPase Obg, found in Legionella pneumophila subsp. pneumophila (strain Philadelphia 1 / ATCC 33152 / DSM 7513).